The sequence spans 427 residues: Histidinol dehydrogenase (427 aa).

Residues Y127, Q187, and N210 each contribute to the NAD(+) site. Residues S233, Q255, and H258 each coordinate substrate. Zn(2+)-binding residues include Q255 and H258. Residues E323 and H324 each act as proton acceptor in the active site. Residues H324, D357, E411, and H416 each coordinate substrate. A Zn(2+)-binding site is contributed by D357. H416 lines the Zn(2+) pocket.

This sequence belongs to the histidinol dehydrogenase family. Zn(2+) is required as a cofactor.

It carries out the reaction L-histidinol + 2 NAD(+) + H2O = L-histidine + 2 NADH + 3 H(+). Its pathway is amino-acid biosynthesis; L-histidine biosynthesis; L-histidine from 5-phospho-alpha-D-ribose 1-diphosphate: step 9/9. Functionally, catalyzes the sequential NAD-dependent oxidations of L-histidinol to L-histidinaldehyde and then to L-histidine. The protein is Histidinol dehydrogenase of Streptococcus mutans serotype c (strain ATCC 700610 / UA159).